A 713-amino-acid chain; its full sequence is Glycine--tRNA ligase beta subunit (713 aa).

Belongs to the class-II aminoacyl-tRNA synthetase family. In terms of assembly, tetramer of two alpha and two beta subunits.

It is found in the cytoplasm. It carries out the reaction tRNA(Gly) + glycine + ATP = glycyl-tRNA(Gly) + AMP + diphosphate. The chain is Glycine--tRNA ligase beta subunit from Leptothrix cholodnii (strain ATCC 51168 / LMG 8142 / SP-6) (Leptothrix discophora (strain SP-6)).